A 159-amino-acid polypeptide reads, in one-letter code: SsrA-binding protein (159 aa).

The interval 131–159 (KGKKLHDKRESEKERDWNRQKSRLLKDNG) is disordered. Residues 137-159 (DKRESEKERDWNRQKSRLLKDNG) show a composition bias toward basic and acidic residues.

Belongs to the SmpB family.

The protein resides in the cytoplasm. In terms of biological role, required for rescue of stalled ribosomes mediated by trans-translation. Binds to transfer-messenger RNA (tmRNA), required for stable association of tmRNA with ribosomes. tmRNA and SmpB together mimic tRNA shape, replacing the anticodon stem-loop with SmpB. tmRNA is encoded by the ssrA gene; the 2 termini fold to resemble tRNA(Ala) and it encodes a 'tag peptide', a short internal open reading frame. During trans-translation Ala-aminoacylated tmRNA acts like a tRNA, entering the A-site of stalled ribosomes, displacing the stalled mRNA. The ribosome then switches to translate the ORF on the tmRNA; the nascent peptide is terminated with the 'tag peptide' encoded by the tmRNA and targeted for degradation. The ribosome is freed to recommence translation, which seems to be the essential function of trans-translation. This is SsrA-binding protein from Rhizobium etli (strain CIAT 652).